The primary structure comprises 1454 residues: Receptor-type tyrosine-protein phosphatase T (1454 aa).

The first 29 residues, 1-29, serve as a signal peptide directing secretion; the sequence is MGSLGGLALCLLRLLLLGLQRPPLPGAGA. Over 30 to 770 the chain is Extracellular; that stretch reads QSAAGGCSFD…EKQVDNTVKM (741 aa). In terms of domain architecture, MAM spans 34 to 195; sequence GGCSFDEHYS…VRVLAHPCRK (162 aa). 4 N-linked (GlcNAc...) asparagine glycosylation sites follow: Asn82, Asn102, Asn141, and Asn212. Residues 197–288 enclose the Ig-like C2-type domain; the sequence is PHFLRLQNVE…SGVSNYAELI (92 aa). Cys217 and Cys271 are oxidised to a cystine. Fibronectin type-III domains are found at residues 295-388, 393-487, and 488-594; these read PIAP…TKCA, GPQN…TEED, and VPGA…SAPS. N-linked (GlcNAc...) asparagine glycans are attached at residues Asn425, Asn514, Asn551, Asn605, Asn658, and Asn688. The Fibronectin type-III 4 domain maps to 670 to 767; sequence AELKPSNLPV…VEPEKQVDNT (98 aa). A helical transmembrane segment spans residues 771-791; sequence AGVIAGLLMFIIILLGVMLTI. The Cytoplasmic segment spans residues 792–1454; sequence KRRKLAKKQK…EVALEYLSSF (663 aa). The interval 800 to 852 is disordered; that stretch reads QKETQSGAQREMGPVASTDKPTAKLGTNRNDEGFSSSSQDVNGFTDGSRGELS. Over residues 824–841 the composition is skewed to polar residues; that stretch reads LGTNRNDEGFSSSSQDVN. Tyrosine-protein phosphatase domains follow at residues 902–1156 and 1188–1450; these read FKEE…ILEA and IKDE…ALEY. Residues Asp1065, 1097-1103, and Gln1141 each bind substrate; that span reads CSAGAGR. Cys1097 (phosphocysteine intermediate) is an active-site residue. Ser1221 carries the post-translational modification Phosphoserine. Cys1391 acts as the Phosphocysteine intermediate in catalysis.

Belongs to the protein-tyrosine phosphatase family. Receptor class 2B subfamily. Expression is restricted to the CNS. Distributed throughout the brain and spinal cord.

The protein localises to the membrane. The enzyme catalyses O-phospho-L-tyrosyl-[protein] + H2O = L-tyrosyl-[protein] + phosphate. Functionally, may be involved in both signal transduction and cellular adhesion in the CNS. May have specific signaling roles in the tyrosine phosphorylation/dephosphorylation pathway in the anterior compartment of the adult cerebellar cortex. This chain is Receptor-type tyrosine-protein phosphatase T (Ptprt), found in Mus musculus (Mouse).